The primary structure comprises 60 residues: Large ribosomal subunit protein uL30 (60 aa).

The protein belongs to the universal ribosomal protein uL30 family. In terms of assembly, part of the 50S ribosomal subunit.

This chain is Large ribosomal subunit protein uL30, found in Streptococcus pneumoniae (strain Hungary19A-6).